The chain runs to 163 residues: Cyanate hydratase (163 aa).

Residues arginine 103, glutamate 106, and serine 129 contribute to the active site.

It belongs to the cyanase family.

The catalysed reaction is cyanate + hydrogencarbonate + 3 H(+) = NH4(+) + 2 CO2. In terms of biological role, catalyzes the reaction of cyanate with bicarbonate to produce ammonia and carbon dioxide. The chain is Cyanate hydratase from Ajellomyces capsulatus (strain G186AR / H82 / ATCC MYA-2454 / RMSCC 2432) (Darling's disease fungus).